Here is a 144-residue protein sequence, read N- to C-terminus: Cysteine desulfuration protein SufE (144 aa).

The Cysteine persulfide intermediate role is filled by C51.

It belongs to the SufE family. Homodimer. Interacts with SufS.

The protein resides in the cytoplasm. Its pathway is cofactor biosynthesis; iron-sulfur cluster biosynthesis. Functionally, participates in cysteine desulfuration mediated by SufS. Cysteine desulfuration mobilizes sulfur from L-cysteine to yield L-alanine and constitutes an essential step in sulfur metabolism for biosynthesis of a variety of sulfur-containing biomolecules. Functions as a sulfur acceptor for SufS, by mediating the direct transfer of the sulfur atom from the S-sulfanylcysteine of SufS, an intermediate product of cysteine desulfuration process. In Wigglesworthia glossinidia brevipalpis, this protein is Cysteine desulfuration protein SufE.